We begin with the raw amino-acid sequence, 199 residues long: Shikimate kinase (199 aa).

Residue 12–17 coordinates ATP; sequence GAGKST. Ser16 provides a ligand contact to Mg(2+). The substrate site is built by Asp34, Arg58, and Gly80. Arg117 lines the ATP pocket. Position 136 (Arg136) interacts with substrate. Residues 174 to 199 are disordered; the sequence is VSGGDRKSSEAERSGAPLRKSSEVVK. Residues 177–186 show a composition bias toward basic and acidic residues; that stretch reads GDRKSSEAER.

The protein belongs to the shikimate kinase family. Monomer. It depends on Mg(2+) as a cofactor.

It is found in the cytoplasm. The enzyme catalyses shikimate + ATP = 3-phosphoshikimate + ADP + H(+). Its pathway is metabolic intermediate biosynthesis; chorismate biosynthesis; chorismate from D-erythrose 4-phosphate and phosphoenolpyruvate: step 5/7. In terms of biological role, catalyzes the specific phosphorylation of the 3-hydroxyl group of shikimic acid using ATP as a cosubstrate. The protein is Shikimate kinase of Mycobacterium leprae (strain TN).